Here is a 327-residue protein sequence, read N- to C-terminus: Ketol-acid reductoisomerase (NADP(+)) (327 aa).

Residues 2 to 182 (AKIYTDKDAS…GATRAGVIET (181 aa)) form the KARI N-terminal Rossmann domain. NADP(+)-binding positions include 25-28 (YGIQ), arginine 48, serine 53, and 83-86 (DMEQ). Histidine 108 is a catalytic residue. Glycine 134 provides a ligand contact to NADP(+). A KARI C-terminal knotted domain is found at 183-327 (TFAEETETDL…GAEMRKLLFG (145 aa)). Mg(2+) contacts are provided by aspartate 191, glutamate 195, glutamate 227, and glutamate 231. Residue serine 252 coordinates substrate.

This sequence belongs to the ketol-acid reductoisomerase family. It depends on Mg(2+) as a cofactor.

The catalysed reaction is (2R)-2,3-dihydroxy-3-methylbutanoate + NADP(+) = (2S)-2-acetolactate + NADPH + H(+). It carries out the reaction (2R,3R)-2,3-dihydroxy-3-methylpentanoate + NADP(+) = (S)-2-ethyl-2-hydroxy-3-oxobutanoate + NADPH + H(+). It functions in the pathway amino-acid biosynthesis; L-isoleucine biosynthesis; L-isoleucine from 2-oxobutanoate: step 2/4. Its pathway is amino-acid biosynthesis; L-valine biosynthesis; L-valine from pyruvate: step 2/4. Involved in the biosynthesis of branched-chain amino acids (BCAA). Catalyzes an alkyl-migration followed by a ketol-acid reduction of (S)-2-acetolactate (S2AL) to yield (R)-2,3-dihydroxy-isovalerate. In the isomerase reaction, S2AL is rearranged via a Mg-dependent methyl migration to produce 3-hydroxy-3-methyl-2-ketobutyrate (HMKB). In the reductase reaction, this 2-ketoacid undergoes a metal-dependent reduction by NADPH to yield (R)-2,3-dihydroxy-isovalerate. The sequence is that of Ketol-acid reductoisomerase (NADP(+)) from Pyrobaculum neutrophilum (strain DSM 2338 / JCM 9278 / NBRC 100436 / V24Sta) (Thermoproteus neutrophilus).